Reading from the N-terminus, the 127-residue chain is Large ribosomal subunit protein bL17 (127 aa).

It belongs to the bacterial ribosomal protein bL17 family. Part of the 50S ribosomal subunit. Contacts protein L32.

This chain is Large ribosomal subunit protein bL17, found in Salmonella paratyphi A (strain AKU_12601).